The chain runs to 1224 residues: MSLRFILGRAGTGKSRACLDEIAQELKGSPQGPPLLFLVPEQATFQTERALATMPGLGGTIRAQVFSFRRLAYRVLQEVGGSARIPIGDLGKRMILRNLLEKHKDELRLFHRSAGQPGFADALAGALSELKLYNIDATSLDRCQTEVIERQGAGLLADKLHDLALLYGALKTFLEGKYTDPDDYLHLLAQRIPGSVMLRDAEVWVDGFAGFTPQELSVLAALMSACRRVNVALCLDPTELDEPCDLDDPFFRTRETQAKLLQLAFDRGIVIEKALHLVPAPGQSAPRFQHPELQHLESFYFRRPAPPWLGGTQSLFVCAAANRRSEVEGAAREIIRLCRDQGYRWRDVAVLLRDLESYYDSIESVFSDFGIPLFIDSKRPAPHHPLVELIRSALEAVLRDWAYEPVFRYLKTDLVPLSRGETDRLENYVLAHGIRGRRWRDREPWLFRRRLTLGEDALSEFSDQELAELAEINGARDRARAALASFHKAVVGAKAVRPITAALYQLLVDLKAPEQISCWIAEAEAAGRIEEAHAHRQVWAAVIDLFDQIVESLGETPLDLATYAVVMEAGLDSLKLSLIPPELDQVFVGSLDRSRCPGIRAAFVLGVSEGVLPARPKDDGIFDDKERERIYALTGLELAPGSRRRLFDEEYHIYVALTRASERCYLSYPLADAEGRAQLPSSVIARVRELFPQVTERTWLLEPGSLPTGAGLSGSAFAGAATAETAAMAQTALAARTTKEAAMSAVERELAEEYIVHPARSLSYLIPSLREALARRPVPLVWWAVYSWLAERPAWRELLARVLSGLWHKNREQDLPKPVSRRLFGDPLRASVSRIERFLACPFSHFISHGLRLKERRIFRLAAPDLGEFFHAALKQFGERLRRDRLDWGALPREELFRLTGEVVSDLAPQLQNEILLSTARHRYLTGRLQQTLSRAVIVLGEHARRGQFRPLALEVGFGPEELLPPVQVPLTGGRWMDLVGRIDRIDGFFVGDASWLRVIDYKSNRANLKLADIAHGLKLQLLAYLDVALRHGNRLLQGCALGEDRPSSLSAATACHPGGMLYFGICDPLLSTGGPLTRDEAERAILKEAKMCGHVLADPAVVAAMDGQTRQGYSPLIPVGLKKEGGFYSASSVLTMEQFALLRQYLQSIVARVGEAILDGLVSIRPHRRDDRLACSFCPYKSVCQFDLLLQDNDYRLLIDDPPEKIWEKIAAGPKAIFEGVIR.

The 326-residue stretch at 1–326 folds into the UvrD-like helicase ATP-binding domain; the sequence is MSLRFILGRA…VCAAANRRSE (326 aa). 8 to 15 lines the ATP pocket; the sequence is GRAGTGKS. Residues 283–584 enclose the UvrD-like helicase C-terminal domain; it reads QSAPRFQHPE…KLSLIPPELD (302 aa). The [4Fe-4S] cluster site is built by cysteine 841, cysteine 1176, cysteine 1179, and cysteine 1185.

This sequence belongs to the helicase family. AddB/RexB type 1 subfamily. Heterodimer of AddA and AddB. It depends on Mg(2+) as a cofactor. [4Fe-4S] cluster serves as cofactor.

In terms of biological role, the heterodimer acts as both an ATP-dependent DNA helicase and an ATP-dependent, dual-direction single-stranded exonuclease. Recognizes the chi site generating a DNA molecule suitable for the initiation of homologous recombination. The AddB subunit has 5' -&gt; 3' nuclease activity but not helicase activity. This is ATP-dependent helicase/deoxyribonuclease subunit B from Heliobacterium modesticaldum (strain ATCC 51547 / Ice1).